A 218-amino-acid polypeptide reads, in one-letter code: Leucine-rich repeat protein 1 (218 aa).

The first 27 residues, 1–27 (MASRNYRWELFAASLTLTLALIHLVEA), serve as a signal peptide directing secretion. LRR repeat units lie at residues 94–117 (EHLQ…LGNL), 119–140 (NLIS…SLGK), 141–165 (LKSL…LTAI), and 167–190 (SLKV…PFAH).

Interacts with HIR1.

In terms of biological role, involved in plant defense response. The polypeptide is Leucine-rich repeat protein 1 (Arabidopsis thaliana (Mouse-ear cress)).